Here is a 238-residue protein sequence, read N- to C-terminus: Probable transcriptional regulatory protein YeeN (238 aa).

It belongs to the TACO1 family. YeeN subfamily.

Its subcellular location is the cytoplasm. The protein is Probable transcriptional regulatory protein YeeN of Shigella sonnei (strain Ss046).